Consider the following 402-residue polypeptide: E3 ubiquitin-protein ligase MARCHF11 (402 aa).

The span at 1–11 shows a compositional bias: gly residues; the sequence is MSFEGGHGGSR. Residues 1–161 are disordered; that stretch reads MSFEGGHGGS…SGGGDQRAGH (161 aa). The segment covering 21 to 56 has biased composition (pro residues); that stretch reads EPPPQPPPPPPPTPPPGEPAPVPAAPRYLPPLPASP. Residues 111–124 are compositionally biased toward low complexity; sequence EAAAAKGGPGESEA. Residues 162–222 form an RING-CH-type zinc finger; the sequence is QHQHHQPICK…ELCCYRYHVI (61 aa). The Zn(2+) site is built by cysteine 170, cysteine 173, cysteine 186, cysteine 188, histidine 196, cysteine 199, cysteine 212, and cysteine 215. The next 2 membrane-spanning stretches (helical) occupy residues 245-265 and 278-298; these read MIAV…LLWS and ILFQ…IGLI. The YXXL motif motif lies at 371 to 374; that stretch reads YVLL. A PDZ-binding motif is present at residues 399 to 402; sequence VTSV.

In terms of assembly, interacts (YXXL motif) with AP1M1. Interacts (via PDZ-binding motif) with LIN7A. Interacts with unidentified fucose glycoproteins.

It is found in the cytoplasmic vesicle membrane. The enzyme catalyses S-ubiquitinyl-[E2 ubiquitin-conjugating enzyme]-L-cysteine + [acceptor protein]-L-lysine = [E2 ubiquitin-conjugating enzyme]-L-cysteine + N(6)-ubiquitinyl-[acceptor protein]-L-lysine.. It functions in the pathway protein modification; protein ubiquitination. E3 ubiquitin-protein ligase that mediates polyubiquitination of CD4. E3 ubiquitin ligases accept ubiquitin from an E2 ubiquitin-conjugating enzyme in the form of a thioester and then directly transfer the ubiquitin to targeted substrates. May play a role in ubuquitin-dependent protein sorting in developmenting spermatids. The chain is E3 ubiquitin-protein ligase MARCHF11 from Homo sapiens (Human).